A 192-amino-acid chain; its full sequence is Ras-like protein RAS2 (192 aa).

15–22 is a binding site for GTP; that stretch reads GGGGVGKS. The Effector region signature appears at 37 to 45; sequence YDPTIEDSY. Residues 62–66 and 121–124 contribute to the GTP site; these read DTAGQ and NKSD. Cys189 carries the cysteine methyl ester modification. Residue Cys189 is the site of S-geranylgeranyl cysteine attachment. Positions 190 to 192 are cleaved as a propeptide — removed in mature form; it reads IVL.

Belongs to the small GTPase superfamily. Ras family.

It localises to the cell membrane. The enzyme catalyses GTP + H2O = GDP + phosphate + H(+). Its activity is regulated as follows. Alternates between an inactive form bound to GDP and an active form bound to GTP. Activated by a guanine nucleotide-exchange factor (GEF) and inactivated by a GTPase-activating protein (GAP). Functionally, ras proteins bind GDP/GTP and possess intrinsic GTPase activity. This chain is Ras-like protein RAS2 (RAS2), found in Hydra vulgaris (Hydra).